The sequence spans 209 residues: Large ribosomal subunit protein uL3 (209 aa).

N5-methylglutamine is present on glutamine 150.

Belongs to the universal ribosomal protein uL3 family. As to quaternary structure, part of the 50S ribosomal subunit. Forms a cluster with proteins L14 and L19. Post-translationally, methylated by PrmB.

In terms of biological role, one of the primary rRNA binding proteins, it binds directly near the 3'-end of the 23S rRNA, where it nucleates assembly of the 50S subunit. The chain is Large ribosomal subunit protein uL3 from Aliivibrio salmonicida (strain LFI1238) (Vibrio salmonicida (strain LFI1238)).